Reading from the N-terminus, the 853-residue chain is MATAEVGGGGGEGDAAAAAVARAGGGGGGGGGGGEDALFTELWSACAGPLVTVPRVGEKVFYFPQGHIEQVEASTNQVGEQRMQLYNLPWKILCEVMNVELKAEPDTDEVYAQLTLLPESKQQEDNGSTEEEVPSAPAAGHVRPRVHSFCKTLTASDTSTHGGFSVLRRHADECLPPLDMSRQPPTQELVAKDLHGVEWRFRHIFRGQPRRHLLQSGWSVFVSAKRLVAGDAFIFLRGENGELRVGVRRAMRQQTNVPSSVISSHSMHLGVLATAWHAVNTGTMFTVYYKPRTSPAEFVVPYDRYMESLKQNYSIGMRFKMRFEGEEAPEQRFTGTIVGMGDSDPAGWPESKWRSLKVRWDEASSIPRPERVSPWQIEPAVSPPPVNPLPVPRTKRLRPNATALPADSSAIAKEAATKVVVESEPNGTQRTFQTQENATPKSGFGNSSELESAQKSIMRPSGFDREKNNTPIQWKLGSDGRMQMSKPESYSEMLSGFQPPKDVQIPQGFCSLPEQITAGHSNFWHTVNAQYQDQQSNHNMFPSSWSFMPPNTRLGLNKQNYSMIQEAGVLSQRPGNTKFGNGVYAALPGRGTEQYSGGWFGHMMPNSHMDDTQPRLIKPKPLVVAHGDVQKAKGASCKLFGIHLDSPAKSEPLKSPSSVVYDGTPQTPGATEWRRPDVTEVEKCSDPSKAMKPLDTPQPDSVPEKPSSQQASRNMSCKSQGVSTRSCKKVHKQGIALGRSVDLTKFNGYEELIAELDDMFDFNGELKGPKKEWMVVYTDNEGDMMLVGDDPWIEFCDMVHKIFIYTREEVQRMNPGTLNSRSEDSHANSMERGSVGREMRGCLSTSSLNSENC.

Residues 118–141 (PESKQQEDNGSTEEEVPSAPAAGH) form a disordered region. The TF-B3 DNA-binding region spans 149–251 (FCKTLTASDT…ELRVGVRRAM (103 aa)). Disordered stretches follow at residues 422 to 484 (ESEP…RMQM) and 647 to 723 (PAKS…QGVS). Residues 425–455 (PNGTQRTFQTQENATPKSGFGNSSELESAQK) are compositionally biased toward polar residues. Over residues 672–686 (EWRRPDVTEVEKCSD) the composition is skewed to basic and acidic residues. Residues 706–723 (PSSQQASRNMSCKSQGVS) show a composition bias toward polar residues. The PB1 domain occupies 725–809 (RSCKKVHKQG…HKIFIYTREE (85 aa)). Residues 815–853 (PGTLNSRSEDSHANSMERGSVGREMRGCLSTSSLNSENC) form a disordered region. The span at 843–853 (LSTSSLNSENC) shows a compositional bias: polar residues.

This sequence belongs to the ARF family. As to quaternary structure, homodimers and heterodimers. Interacts with CRL1. As to expression, expressed in roots, culms, leaves and young panicles.

The protein resides in the nucleus. Its function is as follows. Auxin response factors (ARFs) are transcriptional factors that bind specifically to the DNA sequence 5'-TGTCTC-3' found in the auxin-responsive promoter elements (AuxREs). The protein is Auxin response factor 23 (ARF23) of Oryza sativa subsp. japonica (Rice).